Here is a 54-residue protein sequence, read N- to C-terminus: UPF0181 protein PM0480 (54 aa).

This sequence belongs to the UPF0181 family.

This Pasteurella multocida (strain Pm70) protein is UPF0181 protein PM0480.